Consider the following 433-residue polypeptide: Ligand-dependent corepressor (433 aa).

Positions 1 to 51 (MQRMIQQFAAEYTSKNSSTQDPSQPNSTKNQSLPKASPVTTSPTAATTQNP) are disordered. Residues 13 to 34 (TSKNSSTQDPSQPNSTKNQSLP) show a composition bias toward polar residues. Residues 36–48 (ASPVTTSPTAATT) are compositionally biased toward low complexity. Residue serine 42 is modified to Phosphoserine. The short motif at 53 to 57 (LSKLL) is the Interaction with nuclear receptors element. Serine 63 is modified (phosphoserine). The segment at 64–147 (PLDLTVRKSQ…GTREGFGHST (84 aa)) is disordered. Residues 93–110 (AGSTSLSHSPGCSSTQGN) are compositionally biased toward polar residues. Phosphoserine is present on serine 249. A Glycyl lysine isopeptide (Lys-Gly) (interchain with G-Cter in SUMO2) cross-link involves residue lysine 254. Residues 299–348 (QSRKSMLDAGPDSWGSDAEQSTSGQPYPTSDQEGDPGSKQPRKKRGRYRQ) form a disordered region. The span at 316–329 (AEQSTSGQPYPTSD) shows a compositional bias: polar residues. A Nuclear localization signal motif is present at residues 339–345 (PRKKRGR). The 53-residue stretch at 340 to 392 (RKKRGRYRQYNSEILEEAISVVMSGKMSVSKAQSIYGIPHSTLEYKVKERLGT) folds into the HTH psq-type domain. Arginine 345 is covalently cross-linked (Glycyl lysine isopeptide (Lys-Gly) (interchain with G-Cter in SUMO2)). The segment at residues 368-388 (VSKAQSIYGIPHSTLEYKVKE) is a DNA-binding region (H-T-H motif). Residue glycine 391 forms a Glycyl lysine isopeptide (Lys-Gly) (interchain with G-Cter in SUMO2) linkage. Residues 393-412 (LKNPPKKKMKLMRSEGPDVS) are disordered. A Glycyl lysine isopeptide (Lys-Gly) (interchain with G-Cter in SUMO2) cross-link involves residue lysine 414.

Interacts with ESR1 and ESR2 in the presence of estradiol. Interacts with CTBP1, HDAC3 and HDAC6. Component of a large corepressor complex that contains about 20 proteins, including CTBP1, CTBP2, HDAC1 and HDAC2. In terms of tissue distribution, ubiquitous.

It is found in the nucleus. May act as transcription activator that binds DNA elements with the sequence 5'-CCCTATCGATCGATCTCTACCT-3'. Repressor of ligand-dependent transcription activation by target nuclear receptors. Repressor of ligand-dependent transcription activation by ESR1, ESR2, NR3C1, PGR, RARA, RARB, RARG, RXRA and VDR. The polypeptide is Ligand-dependent corepressor (Homo sapiens (Human)).